We begin with the raw amino-acid sequence, 214 residues long: Ribosomal RNA small subunit methyltransferase G (214 aa).

S-adenosyl-L-methionine contacts are provided by residues glycine 81, methionine 86, 132–133, and arginine 147; that span reads AE.

Belongs to the methyltransferase superfamily. RNA methyltransferase RsmG family.

The protein localises to the cytoplasm. The enzyme catalyses guanosine(527) in 16S rRNA + S-adenosyl-L-methionine = N(7)-methylguanosine(527) in 16S rRNA + S-adenosyl-L-homocysteine. In terms of biological role, specifically methylates the N7 position of guanine in position 527 of 16S rRNA. The sequence is that of Ribosomal RNA small subunit methyltransferase G from Pseudomonas syringae pv. syringae (strain B728a).